A 453-amino-acid polypeptide reads, in one-letter code: Probable glycine dehydrogenase (decarboxylating) subunit 1 (453 aa).

Belongs to the GcvP family. N-terminal subunit subfamily. As to quaternary structure, the glycine cleavage system is composed of four proteins: P, T, L and H. In this organism, the P 'protein' is a heterodimer of two subunits.

It carries out the reaction N(6)-[(R)-lipoyl]-L-lysyl-[glycine-cleavage complex H protein] + glycine + H(+) = N(6)-[(R)-S(8)-aminomethyldihydrolipoyl]-L-lysyl-[glycine-cleavage complex H protein] + CO2. The glycine cleavage system catalyzes the degradation of glycine. The P protein binds the alpha-amino group of glycine through its pyridoxal phosphate cofactor; CO(2) is released and the remaining methylamine moiety is then transferred to the lipoamide cofactor of the H protein. This is Probable glycine dehydrogenase (decarboxylating) subunit 1 from Dictyoglomus turgidum (strain DSM 6724 / Z-1310).